Here is a 474-residue protein sequence, read N- to C-terminus: MASTLRLSTSALRSSTLAGKPVVQSVAFNGLRCYSTGKTKSLKETFADKLPGELEKVKKLRKEHGNKVIGELTLDQAYGGARGVKCLVWEGSVLDSEEGIRFRGLTIPECQKLLPKAPGGEEPLPEGLFWLLLTGEVPSEQQVRDLSAEWAARSDLPKFIEELIDRCPSTLHPMAQFSLAVTALEHESAFAKAYAKGINKKEYWHYTFEDSMDLIAKLPTIAAKIYRNVFKDGKVAPIQKDKDYSYNLANQLGFADNKDFVELMRLYLTIHSDHEGGNVSAHTTHLVGSALSSPMLSLAAGLNGLAGPLHGLANQEVLNWLTEMKKVVGNDLSDQSIKDYLWSTLNAGRVVPGYGHAVLRKTDPRYTSQREFALRKLPDDPMFKLVSQVYKIAPGVLTEHGKTKNPYPNVDAHSGVLLQYYGLTEANYYTVLFGVSRALGVLPQLIIDRAFGAPIERPKSFSTEAYAKLVGAKL.

The N-terminal 35 residues, 1–35, are a transit peptide targeting the mitochondrion; that stretch reads MASTLRLSTSALRSSTLAGKPVVQSVAFNGLRCYS. Active-site residues include His-310, His-356, and Asp-411.

It belongs to the citrate synthase family.

It is found in the mitochondrion matrix. It catalyses the reaction oxaloacetate + acetyl-CoA + H2O = citrate + CoA + H(+). It functions in the pathway carbohydrate metabolism; tricarboxylic acid cycle; isocitrate from oxaloacetate: step 1/2. This is Citrate synthase, mitochondrial (citA) from Emericella nidulans (strain FGSC A4 / ATCC 38163 / CBS 112.46 / NRRL 194 / M139) (Aspergillus nidulans).